Here is a 269-residue protein sequence, read N- to C-terminus: Shikimate dehydrogenase (NADP(+)) (269 aa).

Shikimate contacts are provided by residues 14-16 and Thr-61; that span reads SLS. Catalysis depends on Lys-65, which acts as the Proton acceptor. Glu-76 is an NADP(+) binding site. The shikimate site is built by Asn-85 and Asp-99. NADP(+)-binding positions include 123 to 127, 146 to 151, and Ile-209; these read GAGGA and NRTPER. Residue Tyr-211 coordinates shikimate. Residue Gly-231 participates in NADP(+) binding.

The protein belongs to the shikimate dehydrogenase family. In terms of assembly, homodimer.

It carries out the reaction shikimate + NADP(+) = 3-dehydroshikimate + NADPH + H(+). The protein operates within metabolic intermediate biosynthesis; chorismate biosynthesis; chorismate from D-erythrose 4-phosphate and phosphoenolpyruvate: step 4/7. Its function is as follows. Involved in the biosynthesis of the chorismate, which leads to the biosynthesis of aromatic amino acids. Catalyzes the reversible NADPH linked reduction of 3-dehydroshikimate (DHSA) to yield shikimate (SA). This is Shikimate dehydrogenase (NADP(+)) from Methanothrix thermoacetophila (strain DSM 6194 / JCM 14653 / NBRC 101360 / PT) (Methanosaeta thermophila).